Reading from the N-terminus, the 403-residue chain is Tetratricopeptide repeat protein 19, mitochondrial (403 aa).

The transit peptide at 1 to 67 directs the protein to the mitochondrion; the sequence is MALRSYCRQL…WHRRSWHRCA (67 aa). TPR repeat units follow at residues 154–187, 297–330, and 336–369; these read IYTY…MLSG, LVLM…GQAA, and HVLL…AHTA.

This sequence belongs to the TTC19 family. In terms of assembly, binds to the mature mitochondrial complex III dimer, after the incorporation of the Rieske protein (UQCRFS1). Interacts with UQCRC1 and UQCRFS1. Interacts with ZFYVE26 and CHMP4B.

It localises to the mitochondrion inner membrane. In terms of biological role, required for the preservation of the structural and functional integrity of mitochondrial respiratory complex III by allowing the physiological turnover of the Rieske protein UQCRFS1. Involved in the clearance of UQCRFS1 N-terminal fragments, which are produced upon incorporation into the complex III and whose presence is detrimental for its catalytic activity. The chain is Tetratricopeptide repeat protein 19, mitochondrial (ttc19) from Danio rerio (Zebrafish).